A 361-amino-acid polypeptide reads, in one-letter code: G2/mitotic-specific cyclin-B (361 aa).

This sequence belongs to the cyclin family. Cyclin AB subfamily.

In terms of biological role, essential for the control of the cell cycle at the G2/M (mitosis) transition. Interacts with the CDC2 protein kinase to form MPF. G2/M cyclins accumulate steadily during G2 and are abruptly destroyed at mitosis. The protein is G2/mitotic-specific cyclin-B of Hydra vulgaris (Hydra).